Here is a 365-residue protein sequence, read N- to C-terminus: 3-dehydroquinate synthase (365 aa).

Residues 107–111, 131–132, Lys144, and Lys153 each bind NAD(+); these read GVIGD and TS. Residues Glu186, His251, and His268 each coordinate Zn(2+).

The protein belongs to the sugar phosphate cyclases superfamily. Dehydroquinate synthase family. Co(2+) serves as cofactor. The cofactor is Zn(2+). NAD(+) is required as a cofactor.

It is found in the cytoplasm. It catalyses the reaction 7-phospho-2-dehydro-3-deoxy-D-arabino-heptonate = 3-dehydroquinate + phosphate. Its pathway is metabolic intermediate biosynthesis; chorismate biosynthesis; chorismate from D-erythrose 4-phosphate and phosphoenolpyruvate: step 2/7. Functionally, catalyzes the conversion of 3-deoxy-D-arabino-heptulosonate 7-phosphate (DAHP) to dehydroquinate (DHQ). In Crocosphaera subtropica (strain ATCC 51142 / BH68) (Cyanothece sp. (strain ATCC 51142)), this protein is 3-dehydroquinate synthase.